The chain runs to 466 residues: Soluble pyridine nucleotide transhydrogenase (466 aa).

36–45 (EKESSVGGGC) provides a ligand contact to FAD.

It belongs to the class-I pyridine nucleotide-disulfide oxidoreductase family. The cofactor is FAD.

The protein localises to the cytoplasm. The catalysed reaction is NAD(+) + NADPH = NADH + NADP(+). Conversion of NADPH, generated by peripheral catabolic pathways, to NADH, which can enter the respiratory chain for energy generation. In Vibrio parahaemolyticus serotype O3:K6 (strain RIMD 2210633), this protein is Soluble pyridine nucleotide transhydrogenase.